The chain runs to 470 residues: ATP synthase subunit beta (470 aa).

158 to 165 (GGAGVGKT) lines the ATP pocket.

Belongs to the ATPase alpha/beta chains family. As to quaternary structure, F-type ATPases have 2 components, CF(1) - the catalytic core - and CF(0) - the membrane proton channel. CF(1) has five subunits: alpha(3), beta(3), gamma(1), delta(1), epsilon(1). CF(0) has three main subunits: a(1), b(2) and c(9-12). The alpha and beta chains form an alternating ring which encloses part of the gamma chain. CF(1) is attached to CF(0) by a central stalk formed by the gamma and epsilon chains, while a peripheral stalk is formed by the delta and b chains.

The protein localises to the cell membrane. It catalyses the reaction ATP + H2O + 4 H(+)(in) = ADP + phosphate + 5 H(+)(out). Its function is as follows. Produces ATP from ADP in the presence of a proton gradient across the membrane. The catalytic sites are hosted primarily by the beta subunits. This chain is ATP synthase subunit beta, found in Alkalihalophilus pseudofirmus (strain ATCC BAA-2126 / JCM 17055 / OF4) (Bacillus pseudofirmus).